The following is a 191-amino-acid chain: Elongation factor P (191 aa).

It belongs to the elongation factor P family.

It is found in the cytoplasm. It participates in protein biosynthesis; polypeptide chain elongation. In terms of biological role, involved in peptide bond synthesis. Stimulates efficient translation and peptide-bond synthesis on native or reconstituted 70S ribosomes in vitro. Probably functions indirectly by altering the affinity of the ribosome for aminoacyl-tRNA, thus increasing their reactivity as acceptors for peptidyl transferase. The sequence is that of Elongation factor P from Ralstonia pickettii (strain 12J).